The chain runs to 158 residues: MNKLTHFDDSGQAHMVNVGDKPATHRIAIATGKITMLLETFKMVETGNHKKGDVLGIARIAGIQASKRTADLIPLCHPLALTHVSLEFRLDSTTSTISCKVRAETTGPTGVEMEALTAVQVALLTIYDMCKAVDRGMVMGDIKLLEKSGGKSGEWKLA.

Residues 75–77 and 113–114 contribute to the substrate site; these read LCH and ME. Asp-128 is a catalytic residue.

It belongs to the MoaC family. Homohexamer; trimer of dimers.

The catalysed reaction is (8S)-3',8-cyclo-7,8-dihydroguanosine 5'-triphosphate = cyclic pyranopterin phosphate + diphosphate. It functions in the pathway cofactor biosynthesis; molybdopterin biosynthesis. Its function is as follows. Catalyzes the conversion of (8S)-3',8-cyclo-7,8-dihydroguanosine 5'-triphosphate to cyclic pyranopterin monophosphate (cPMP). In Polynucleobacter asymbioticus (strain DSM 18221 / CIP 109841 / QLW-P1DMWA-1) (Polynucleobacter necessarius subsp. asymbioticus), this protein is Cyclic pyranopterin monophosphate synthase.